The sequence spans 698 residues: Pheromone-regulated protein PRM7 (698 aa).

Disordered stretches follow at residues 1–65 (MYRT…IGNS), 133–183 (ESTT…SAVT), 197–274 (SVDQ…TVTI), and 455–480 (SASSSRSSATSIIKPNMPVSSNDSKT). Composition is skewed to low complexity over residues 9-56 (EVTT…TTSA) and 158-183 (VTTSTDPTSSSDVATSADPTSSSAVT). The segment covering 455 to 465 (SASSSRSSATS) has biased composition (low complexity).

This Saccharomyces cerevisiae (strain ATCC 204508 / S288c) (Baker's yeast) protein is Pheromone-regulated protein PRM7 (PRM7).